A 240-amino-acid chain; its full sequence is Methylthioribulose-1-phosphate dehydratase (240 aa).

Cys99 contacts substrate. Residues His116 and His118 each contribute to the Zn(2+) site. Glu145 serves as the catalytic Proton donor/acceptor. Position 201 (His201) interacts with Zn(2+).

Belongs to the aldolase class II family. MtnB subfamily. The cofactor is Zn(2+).

It is found in the cytoplasm. The catalysed reaction is 5-(methylsulfanyl)-D-ribulose 1-phosphate = 5-methylsulfanyl-2,3-dioxopentyl phosphate + H2O. Its pathway is amino-acid biosynthesis; L-methionine biosynthesis via salvage pathway; L-methionine from S-methyl-5-thio-alpha-D-ribose 1-phosphate: step 2/6. In terms of biological role, catalyzes the dehydration of methylthioribulose-1-phosphate (MTRu-1-P) into 2,3-diketo-5-methylthiopentyl-1-phosphate (DK-MTP-1-P). In Paracoccidioides brasiliensis (strain Pb03), this protein is Methylthioribulose-1-phosphate dehydratase.